The primary structure comprises 436 residues: MKKLLLASIIGLASTTSFASGSTTPVISSSDSEIKLEGFYLFESGFSNQNRLGEFENLSDNRKKTAFYTEAAFAATITKTINDVIGGVKIVLQPTTRSKTSTSYNGSHIFIETSYGKVELGSPYDAGNKLRITGGQVAAGSGGYLRYINVGSKYMQYEKLKPDFDTSPSFYIESFSNNFDEFNVKAEAARKISFYTPKMKGFQAGISYTPDSANTGGNKNINNVVFDDSITGITNVRTGIKRNIVENDEIITINQNVTDSISGGLTYEHALGEDADLKLSVTGEYGKPARLAVRSKVIDKTYTVLDTYKLSNLKAYNLGAVFTYGNFSCGASYGSLGKSLTTPQYHKNGRNTYYYNGAIAYGQGPIKTSLSYFKSSRYKNTVDTITVATEYKIMPGLLPYAEISHFQAKGKPVYYPEAPNKKTKGTVGLIGTKLKF.

The signal sequence occupies residues 1–19 (MKKLLLASIIGLASTTSFA).

This is an uncharacterized protein from Rickettsia bellii (strain RML369-C).